The following is a 386-amino-acid chain: Succinate--CoA ligase [ADP-forming] subunit beta (386 aa).

The 236-residue stretch at 9–244 (KDILRQFGVP…LDEEDPAEVE (236 aa)) folds into the ATP-grasp domain. ATP is bound by residues lysine 46, 53-55 (GRG), glutamate 99, alanine 102, and glutamate 107. Mg(2+)-binding residues include asparagine 199 and aspartate 213. Substrate-binding positions include asparagine 264 and 321 to 323 (GIM).

It belongs to the succinate/malate CoA ligase beta subunit family. As to quaternary structure, heterotetramer of two alpha and two beta subunits. Mg(2+) is required as a cofactor.

The enzyme catalyses succinate + ATP + CoA = succinyl-CoA + ADP + phosphate. It catalyses the reaction GTP + succinate + CoA = succinyl-CoA + GDP + phosphate. The protein operates within carbohydrate metabolism; tricarboxylic acid cycle; succinate from succinyl-CoA (ligase route): step 1/1. Functionally, succinyl-CoA synthetase functions in the citric acid cycle (TCA), coupling the hydrolysis of succinyl-CoA to the synthesis of either ATP or GTP and thus represents the only step of substrate-level phosphorylation in the TCA. The beta subunit provides nucleotide specificity of the enzyme and binds the substrate succinate, while the binding sites for coenzyme A and phosphate are found in the alpha subunit. The polypeptide is Succinate--CoA ligase [ADP-forming] subunit beta (Delftia acidovorans (strain DSM 14801 / SPH-1)).